A 296-amino-acid polypeptide reads, in one-letter code: 4-amino-4-deoxyprephenate dehydrogenase (296 aa).

A Prephenate/arogenate dehydrogenase domain is found at 9–288 (RCVVVGGAGA…EHGAELERLC (280 aa)).

Belongs to the prephenate/arogenate dehydrogenase family.

It catalyses the reaction 4-amino-4-deoxyprephenate + NAD(+) = 3-(4-aminophenyl)pyruvate + CO2 + NADH + H(+). It participates in antibiotic biosynthesis. Involved in pristinamycin I biosynthesis. Probably catalyzes the formation of 3-(4-aminophenyl)pyruvate from 4-amino-4-deoxyprephenate. In Streptomyces pristinaespiralis, this protein is 4-amino-4-deoxyprephenate dehydrogenase.